The following is a 212-amino-acid chain: Glycerol-3-phosphate acyltransferase (212 aa).

The next 5 membrane-spanning stretches (helical) occupy residues 3 to 23 (ILLAALVAYLIGSVSFAVIVS), 51 to 71 (KAAILTLVGDAFKGWLAVWLA), 78 to 98 (DVAVAWVAIAVFVGHLYPVFF), 115 to 135 (AVHPVLGLATALTWLIVAFFF), and 139 to 159 (SLAALVAAVFAPVFDVFLFGT).

This sequence belongs to the PlsY family. In terms of assembly, probably interacts with PlsX.

It is found in the cell inner membrane. The enzyme catalyses an acyl phosphate + sn-glycerol 3-phosphate = a 1-acyl-sn-glycero-3-phosphate + phosphate. It participates in lipid metabolism; phospholipid metabolism. Catalyzes the transfer of an acyl group from acyl-phosphate (acyl-PO(4)) to glycerol-3-phosphate (G3P) to form lysophosphatidic acid (LPA). This enzyme utilizes acyl-phosphate as fatty acyl donor, but not acyl-CoA or acyl-ACP. The protein is Glycerol-3-phosphate acyltransferase of Burkholderia vietnamiensis (strain G4 / LMG 22486) (Burkholderia cepacia (strain R1808)).